The chain runs to 358 residues: Phosphoserine aminotransferase (358 aa).

Position 41 (Arg41) interacts with L-glutamate. Pyridoxal 5'-phosphate-binding positions include 75–76 (AS), Trp100, Thr148, Asp167, and Gln190. Position 191 is an N6-(pyridoxal phosphate)lysine (Lys191). 233–234 (NT) lines the pyridoxal 5'-phosphate pocket.

It belongs to the class-V pyridoxal-phosphate-dependent aminotransferase family. SerC subfamily. As to quaternary structure, homodimer. Pyridoxal 5'-phosphate is required as a cofactor.

It is found in the cytoplasm. The catalysed reaction is O-phospho-L-serine + 2-oxoglutarate = 3-phosphooxypyruvate + L-glutamate. It carries out the reaction 4-(phosphooxy)-L-threonine + 2-oxoglutarate = (R)-3-hydroxy-2-oxo-4-phosphooxybutanoate + L-glutamate. It participates in amino-acid biosynthesis; L-serine biosynthesis; L-serine from 3-phospho-D-glycerate: step 2/3. Its pathway is cofactor biosynthesis; pyridoxine 5'-phosphate biosynthesis; pyridoxine 5'-phosphate from D-erythrose 4-phosphate: step 3/5. Catalyzes the reversible conversion of 3-phosphohydroxypyruvate to phosphoserine and of 3-hydroxy-2-oxo-4-phosphonooxybutanoate to phosphohydroxythreonine. This Campylobacter jejuni (strain RM1221) protein is Phosphoserine aminotransferase.